Consider the following 420-residue polypeptide: Type II methyltransferase M.NmeDI (420 aa).

A disordered region spans residues 1-23 (MMSLKIQPAVPKKSDKPSATNRD). The 356-residue stretch at 56–411 (TLIFSFFSGA…MTLKSYLENH (356 aa)) folds into the SAM-dependent MTase C5-type domain. C148 is an active-site residue.

This sequence belongs to the class I-like SAM-binding methyltransferase superfamily. C5-methyltransferase family.

It carries out the reaction a 2'-deoxycytidine in DNA + S-adenosyl-L-methionine = a 5-methyl-2'-deoxycytidine in DNA + S-adenosyl-L-homocysteine + H(+). A methylase that recognizes the double-stranded sequence 5'-RCCGGB-3', methylates C-2 on both strands, and protects the DNA from cleavage by the NmeDI endonuclease. The protein is Type II methyltransferase M.NmeDI (nmeDIMP) of Neisseria meningitidis serogroup C.